Reading from the N-terminus, the 365-residue chain is tRNA N6-adenosine threonylcarbamoyltransferase (365 aa).

H119 and H123 together coordinate Fe cation. Substrate-binding positions include 141–145 (LVSGG), D174, G187, and N288. D316 is a Fe cation binding site.

Belongs to the KAE1 / TsaD family. Fe(2+) serves as cofactor.

The protein localises to the cytoplasm. It catalyses the reaction L-threonylcarbamoyladenylate + adenosine(37) in tRNA = N(6)-L-threonylcarbamoyladenosine(37) in tRNA + AMP + H(+). Functionally, required for the formation of a threonylcarbamoyl group on adenosine at position 37 (t(6)A37) in tRNAs that read codons beginning with adenine. Is involved in the transfer of the threonylcarbamoyl moiety of threonylcarbamoyl-AMP (TC-AMP) to the N6 group of A37, together with TsaE and TsaB. TsaD likely plays a direct catalytic role in this reaction. The chain is tRNA N6-adenosine threonylcarbamoyltransferase from Agrobacterium fabrum (strain C58 / ATCC 33970) (Agrobacterium tumefaciens (strain C58)).